The following is a 97-amino-acid chain: Glutamyl-tRNA(Gln) amidotransferase subunit C 2 (97 aa).

This sequence belongs to the GatC family. In terms of assembly, heterotrimer of A, B and C subunits.

The enzyme catalyses L-glutamyl-tRNA(Gln) + L-glutamine + ATP + H2O = L-glutaminyl-tRNA(Gln) + L-glutamate + ADP + phosphate + H(+). It catalyses the reaction L-aspartyl-tRNA(Asn) + L-glutamine + ATP + H2O = L-asparaginyl-tRNA(Asn) + L-glutamate + ADP + phosphate + 2 H(+). Functionally, allows the formation of correctly charged Asn-tRNA(Asn) or Gln-tRNA(Gln) through the transamidation of misacylated Asp-tRNA(Asn) or Glu-tRNA(Gln) in organisms which lack either or both of asparaginyl-tRNA or glutaminyl-tRNA synthetases. The reaction takes place in the presence of glutamine and ATP through an activated phospho-Asp-tRNA(Asn) or phospho-Glu-tRNA(Gln). This chain is Glutamyl-tRNA(Gln) amidotransferase subunit C 2 (gatC2), found in Clostridium acetobutylicum (strain ATCC 824 / DSM 792 / JCM 1419 / IAM 19013 / LMG 5710 / NBRC 13948 / NRRL B-527 / VKM B-1787 / 2291 / W).